The primary structure comprises 401 residues: 26S proteasome regulatory subunit 6A (401 aa).

189–196 contacts ATP; the sequence is GPPGTGKT.

The protein belongs to the AAA ATPase family. As to quaternary structure, the 26S proteasome consists of a 20S proteasome core and two 19S regulatory subunits. The 20S proteasome core is composed of 28 subunits that are arranged in four stacked rings, resulting in a barrel-shaped structure. The two end rings are each formed by seven alpha subunits, and the two central rings are each formed by seven beta subunits. The catalytic chamber with the active sites is on the inside of the barrel.

It localises to the cytoplasm. Its subcellular location is the nucleus. Its function is as follows. Acts as a regulatory subunit of the 26S proteasome which degrades poly-ubiquitinated proteins in the cytoplasm and in the nucleus. It is essential for the regulated turnover of proteins and for the removal of misfolded proteins. The proteasome is a multicatalytic proteinase complex that is characterized by its ability to cleave peptides with Arg, Phe, Tyr, Leu, and Glu adjacent to the leaving group at neutral or slightly basic pH. In Encephalitozoon cuniculi (strain GB-M1) (Microsporidian parasite), this protein is 26S proteasome regulatory subunit 6A (RPT5).